A 50-amino-acid chain; its full sequence is Bacteriocin BacSp222 (50 aa).

Methionine 1 carries the post-translational modification N-formylmethionine.

It localises to the secreted. In terms of biological role, has bacteriolytic activity against Gram-positive bacteria B.subtilis, L.lactis and M.luteus and several species from genus Staphylococcus including methicillin-resistant S.aureus, with MIC values ranging from 0.11 uM to 7.8 uM. Has no activity against Gram-negative bacteria or fungi. In vitro, has a dose-dependent cytolytic effect on eukaryotic cells. The polypeptide is Bacteriocin BacSp222 (Staphylococcus pseudintermedius).